We begin with the raw amino-acid sequence, 408 residues long: MDKLLERFLNYVSLDTQSKAGVRQVPSTEGQWKLLHLLKEQLEEMGLINVTLSEKGTLMATLPANVPGDIPAIGFISHVDTSPDCSGKNVNPQIVENYRGGDIALGVGDEVLSPVMFPVLHQLLGQTLITTDGKTLLGADDKAGIAEIMTALAVLQQKNIPHGDIRVAFTPDEEVGKGAKHFDVDAFDARWAYTVDGGGVGELEFENFNAASVNIKIVGNNVHPGTAKGVMVNALSLAARIHAEVPADESPEMTEGYEGFYHLASMKGTVERADMHYIIRDFDRKQFEARKRKMMEIAKKVGKGLHPDCYIELVIEDSYYNMREKVAEHPHILDIAQQAMRDCGIEPQLKPIRGGTDGAQLSFMGLPCPNLFTGGYNYHGKHEFVTLEGMEKAVRVIVRIAELTAKQN.

His78 contributes to the Zn(2+) binding site. Asp80 is a catalytic residue. A Zn(2+)-binding site is contributed by Asp140. Glu173 acts as the Proton acceptor in catalysis. Residues Glu174, Asp196, and His379 each contribute to the Zn(2+) site.

The protein belongs to the peptidase M20B family. It depends on Zn(2+) as a cofactor.

The protein localises to the cytoplasm. The catalysed reaction is Release of the N-terminal residue from a tripeptide.. In terms of biological role, cleaves the N-terminal amino acid of tripeptides. This is Peptidase T from Escherichia fergusonii (strain ATCC 35469 / DSM 13698 / CCUG 18766 / IAM 14443 / JCM 21226 / LMG 7866 / NBRC 102419 / NCTC 12128 / CDC 0568-73).